The following is a 1087-amino-acid chain: MPAMRGLLAPQNTFLDTIATRFDGTHSNFVLGNAQVAGLFPVVYCSDGFCDLTGFSRAEVMQRGCACSFLYGPDTSELVRQQIRKALDEHKEFKAELILYRKSGLPFWCLLDVIPIKNEKGEVALFLVSHKDISETKNRGGPDNWKERGGGRRRYGRAGSKGFNANRRRSRAVLYHLSGHLQKQPKGKHKLNKGVFGEKPNLPEYKVAAIRKSPFILLHCGALRATWDGFILLATLYVAVTVPYSVCVSTAREPSAARGPPSVCDLAVEVLFILDIVLNFRTTFVSKSGQVVFAPKSICLHYVTTWFLLDVIAALPFDLLHAFKVNVYVGAHLLKTVRLLRLLRLLPRLDRYSQYSAVVLTLLMAVFALLAHWVACVWFYIGQQEIENSESELPEIGWLQELARRLETPYYLVSRSPDGGNSSGQSENCSSSGGGSEANGTGLELLGGPSLRSAYITSLYFALSSLTSVGFGNVSANTDTEKIFSICTMLIGALMHAVVFGNVTAIIQRMYARRFLYHSRTRDLRDYIRIHRIPKPLKQRMLEYFQATWAVNNGIDTTELLQSLPDELRADIAMHLHKEVLQLPLFEAASRGCLRALSLALRPAFCTPGEYLIHQGDALQALYFVCSGSMEVLKGGTVLAILGKGDLIGCELPQREQVVKANADVKGLTYCVLQCLQLAGLHESLALYPEFAPRFSRGLRGELSYNLGAGGVSAEVDTSSLSGDNTLMSTLEEKETDGEQGHTISPAPADEPSSPLLSPGCTSSSSAAKLLSPRRTAPRPRLGGRGRPSRAGVLKPEAGPSAHPRTLDGLQLPPMPWNVPPDLSPRVVDGIEDGCGSDQHKFSFRVGQSGPECSSSPSPGTESGLLTVPLVPSEARNTDTLDKLRQAVTELSEQVLQMREGLQSLRQAVQLILVPQGEGQCPRVSGEGPCPATASGLLQPLRVDTGASSYCLQPPAGSVLSGTWPHPRPGHPPPLMAPWPWGPPASQSSPWPRATALWTSTSDSEPPGSGDLCSEPSTPASPPPPEEGARTGTPAPVSQAEATSTGEPPPGSGGRALPWDPHSLEMVLIGCHGPGSVQWTQEEGTGV.

Over 1–228 (MPAMRGLLAP…HCGALRATWD (228 aa)) the chain is Cytoplasmic. In terms of domain architecture, PAS spans 18-90 (IATRFDGTHS…QQIRKALDEH (73 aa)). The PAC domain maps to 93-145 (FKAELILYRKSGLPFWCLLDVIPIKNEKGEVALFLVSHKDISETKNRGGPDNW). Residues 137 to 150 (KNRGGPDNWKERGG) show a composition bias toward basic and acidic residues. Positions 137–161 (KNRGGPDNWKERGGGRRRYGRAGSK) are disordered. Residues 229–249 (GFILLATLYVAVTVPYSVCVS) form a helical membrane-spanning segment. The Extracellular segment spans residues 250–259 (TAREPSAARG). Residues 260–280 (PPSVCDLAVEVLFILDIVLNF) traverse the membrane as a helical segment. Topologically, residues 281 to 302 (RTTFVSKSGQVVFAPKSICLHY) are cytoplasmic. The helical transmembrane segment at 303 to 323 (VTTWFLLDVIAALPFDLLHAF) threads the bilayer. Residues 324-331 (KVNVYVGA) are Extracellular-facing. The helical; Voltage-sensor transmembrane segment at 332 to 352 (HLLKTVRLLRLLRLLPRLDRY) threads the bilayer. Topologically, residues 353 to 361 (SQYSAVVLT) are cytoplasmic. A helical transmembrane segment spans residues 362-382 (LLMAVFALLAHWVACVWFYIG). The Extracellular segment spans residues 383–456 (QQEIENSESE…GGPSLRSAYI (74 aa)). Residues 416 to 436 (SPDGGNSSGQSENCSSSGGGS) form a disordered region. Residues 419 to 431 (GGNSSGQSENCSS) are compositionally biased toward low complexity. Asparagine 421, asparagine 428, and asparagine 439 each carry an N-linked (GlcNAc...) asparagine glycan. Residues 457-477 (TSLYFALSSLTSVGFGNVSAN) constitute an intramembrane region (pore-forming). Positions 468–473 (SVGFGN) match the Selectivity filter motif. Over 478–482 (TDTEK) the chain is Extracellular. Residues 483–503 (IFSICTMLIGALMHAVVFGNV) form a helical membrane-spanning segment. At 504–1087 (TAIIQRMYAR…QWTQEEGTGV (584 aa)) the chain is on the cytoplasmic side. 585–700 (LFEAASRGCL…FAPRFSRGLR (116 aa)) contributes to the a nucleoside 3',5'-cyclic phosphate binding site. Disordered stretches follow at residues 733–813 (EKET…LQLP) and 975–1061 (LMAP…PWDP). Positions 776 to 788 (TAPRPRLGGRGRP) are enriched in basic residues.

This sequence belongs to the potassium channel family. H (Eag) (TC 1.A.1.20) subfamily. Kv12.2/KCNH3 sub-subfamily. The potassium channel is probably composed of a homo- or heterotetrameric complex of pore-forming alpha subunits that can associate with modulating beta subunits. Interacts with KCNE1 and KCNE3; these interactions regulate KCNH3 trafficking to the plasma membrane and its subsequent voltage-gated potassium channel activity. In terms of processing, N-glycosylated. N-glycosylation mediates traffick to the cell membrane but is not necessary for voltage-gated potassium channel activity. Highly expressed in adult and embryonic brain, in particular in cerebellum, brain stem, hippocampus, cortex and striatum. Also found in pituitary.

It localises to the cell membrane. The catalysed reaction is K(+)(in) = K(+)(out). Pore-forming (alpha) subunit of a voltage-gated inwardly rectifying potassium channel. Charactherized by a fast rate of activation during depolarization followed by a rapid inactivation at much more depolarized value causing inward rectification due to a C-type inactivation mechanism. Exhibits a rapid recovery from inactivation. The protein is Voltage-gated inwardly rectifying potassium channel KCNH3 of Rattus norvegicus (Rat).